Consider the following 306-residue polypeptide: GTPase Era (306 aa).

The 168-residue stretch at lysine 14 to glutamate 181 folds into the Era-type G domain. Residues glycine 22–serine 29 are G1. Glycine 22–serine 29 serves as a coordination point for GTP. The segment at glutamine 48–asparagine 52 is G2. Residues aspartate 69–glycine 72 are G3. GTP is bound by residues aspartate 69 to isoleucine 73 and asparagine 131 to aspartate 134. The interval asparagine 131–aspartate 134 is G4. A G5 region spans residues isoleucine 160–alanine 162. The KH type-2 domain occupies threonine 212–lysine 290.

Belongs to the TRAFAC class TrmE-Era-EngA-EngB-Septin-like GTPase superfamily. Era GTPase family. As to quaternary structure, monomer.

The protein localises to the cytoplasm. Its subcellular location is the cell inner membrane. In terms of biological role, an essential GTPase that binds both GDP and GTP, with rapid nucleotide exchange. Plays a role in 16S rRNA processing and 30S ribosomal subunit biogenesis and possibly also in cell cycle regulation and energy metabolism. This Syntrophus aciditrophicus (strain SB) protein is GTPase Era.